A 306-amino-acid polypeptide reads, in one-letter code: Probable 2-dehydro-3-deoxygalactonokinase DgoK1 (306 aa).

It belongs to the DgoK family.

It catalyses the reaction 2-dehydro-3-deoxy-D-galactonate + ATP = 2-dehydro-3-deoxy-6-phospho-D-galactonate + ADP + H(+). It participates in carbohydrate acid metabolism; D-galactonate degradation; D-glyceraldehyde 3-phosphate and pyruvate from D-galactonate: step 2/3. In terms of biological role, involved in the degradation of galactose via the DeLey-Doudoroff pathway. The polypeptide is Probable 2-dehydro-3-deoxygalactonokinase DgoK1 (dgoK1) (Rhizobium meliloti (strain 1021) (Ensifer meliloti)).